The following is an 87-amino-acid chain: Glutaredoxin 1 (87 aa).

Residues 1 to 87 (MFTVIFGRPG…WAKENLNLFA (87 aa)) form the Glutaredoxin domain. A disulfide bridge connects residues Cys-11 and Cys-14.

This sequence belongs to the glutaredoxin family. As to quaternary structure, monomer.

In terms of biological role, the disulfide bond functions as an electron carrier in the glutathione-dependent synthesis of deoxyribonucleotides by the enzyme ribonucleotide reductase. In addition, it is also involved in reducing some disulfides in a coupled system with glutathione reductase. This is Glutaredoxin 1 (grxA) from Salmonella typhi.